The following is a 36-amino-acid chain: Potassium channel toxin alpha-KTx 6.14 (36 aa).

4 disulfides stabilise this stretch: cysteine 5/cysteine 25, cysteine 11/cysteine 30, cysteine 15/cysteine 32, and cysteine 20/cysteine 35.

As to expression, expressed by the venom gland.

The protein localises to the secreted. Functionally, blocks Shaker B channels expressed in Sf9 cells, with a dissociation constant of 52 nM. The chain is Potassium channel toxin alpha-KTx 6.14 from Hoffmannihadrurus gertschi (Scorpion).